The chain runs to 713 residues: Forkhead box protein P2 (713 aa).

Polar residues predominate over residues Met1–Asp28. 2 disordered regions span residues Met1–Ser45 and Asp279–Ser337. Positions Thr290–Ser303 are enriched in low complexity. Positions Ser313–Leu322 are enriched in polar residues. A compositionally biased stretch (basic and acidic residues) spans Ala324 to Gly335. A C2H2-type zinc finger spans residues Gly344–His369. Positions Val386 to Leu407 are leucine-zipper. Positions Pro420–Val424 are CTBP1-binding. Residues Thr436–Gln457 are compositionally biased toward low complexity. The disordered stretch occupies residues Thr436 to Thr463. Positions Arg502–Leu592 form a DNA-binding region, fork-head. Disordered regions lie at residues Leu647–Ile666 and Val676–Glu713. Acidic residues predominate over residues Leu697–Glu713.

As to quaternary structure, forms homodimers and heterodimers with FOXP1 and FOXP4. Dimerization is required for DNA-binding. Interacts with CTBP1. Interacts with FOXP1. Interacts with TBR1. Interacts with ZMYM2.

It localises to the nucleus. Transcriptional repressor that may play a role in the specification and differentiation of lung epithelium. May also play a role in developing neural, gastrointestinal and cardiovascular tissues. Can act with CTBP1 to synergistically repress transcription but CTPBP1 is not essential. Plays a role in synapse formation by regulating SRPX2 levels. In Hylobates lar (Lar gibbon), this protein is Forkhead box protein P2 (FOXP2).